The chain runs to 213 residues: Imidazole glycerol phosphate synthase subunit HisH (213 aa).

In terms of domain architecture, Glutamine amidotransferase type-1 spans 4–211 (NLGVIDYGMG…LHWLHQGAEP (208 aa)). The active-site Nucleophile is Cys-82. Catalysis depends on residues His-186 and Glu-188.

As to quaternary structure, heterodimer of HisH and HisF.

It localises to the cytoplasm. It carries out the reaction 5-[(5-phospho-1-deoxy-D-ribulos-1-ylimino)methylamino]-1-(5-phospho-beta-D-ribosyl)imidazole-4-carboxamide + L-glutamine = D-erythro-1-(imidazol-4-yl)glycerol 3-phosphate + 5-amino-1-(5-phospho-beta-D-ribosyl)imidazole-4-carboxamide + L-glutamate + H(+). It catalyses the reaction L-glutamine + H2O = L-glutamate + NH4(+). The protein operates within amino-acid biosynthesis; L-histidine biosynthesis; L-histidine from 5-phospho-alpha-D-ribose 1-diphosphate: step 5/9. In terms of biological role, IGPS catalyzes the conversion of PRFAR and glutamine to IGP, AICAR and glutamate. The HisH subunit catalyzes the hydrolysis of glutamine to glutamate and ammonia as part of the synthesis of IGP and AICAR. The resulting ammonia molecule is channeled to the active site of HisF. This is Imidazole glycerol phosphate synthase subunit HisH from Synechococcus sp. (strain CC9902).